The chain runs to 727 residues: Catalase-peroxidase (727 aa).

Positions 1–26 are disordered; sequence MSDEKKCPVTGRTSSQVAGSGTSNKD. Residues 11 to 26 show a composition bias toward polar residues; that stretch reads GRTSSQVAGSGTSNKD. A cross-link (tryptophyl-tyrosyl-methioninium (Trp-Tyr) (with M-245)) is located at residues 96-219; sequence WHSAGTYRIG…LAAVQMGLIY (124 aa). Histidine 97 acts as the Proton acceptor in catalysis. Residues 219-245 constitute a cross-link (tryptophyl-tyrosyl-methioninium (Tyr-Met) (with W-96)); the sequence is YVNPEGPNGDPNAVASGKDVRETFARM. Histidine 260 contacts heme b. Residues 346–362 show a composition bias toward basic and acidic residues; sequence SDPEAKKAVPDAHDPSK. A disordered region spans residues 346 to 365; sequence SDPEAKKAVPDAHDPSKTHP.

The protein belongs to the peroxidase family. Peroxidase/catalase subfamily. In terms of assembly, homodimer or homotetramer. Requires heme b as cofactor. In terms of processing, formation of the three residue Trp-Tyr-Met cross-link is important for the catalase, but not the peroxidase activity of the enzyme.

The catalysed reaction is H2O2 + AH2 = A + 2 H2O. The enzyme catalyses 2 H2O2 = O2 + 2 H2O. Functionally, bifunctional enzyme with both catalase and broad-spectrum peroxidase activity. The chain is Catalase-peroxidase from Maridesulfovibrio salexigens (strain ATCC 14822 / DSM 2638 / NCIMB 8403 / VKM B-1763) (Desulfovibrio salexigens).